The following is a 136-amino-acid chain: MEFEVKSPILGFESVRGMRLEKIDDLFMKLKNAEADSPVFTLVNPFLLREYDFEIPLAMKVLLDLKENTNLLVLNIMIIHTPLESSTVNFLAPVIFNFDNHTMGQLVLESHRYPAYGLAETISSFFNSDSTPTQEA.

Belongs to the FliW family. As to quaternary structure, interacts with translational regulator CsrA and flagellin(s).

The protein resides in the cytoplasm. In terms of biological role, acts as an anti-CsrA protein, binds CsrA and prevents it from repressing translation of its target genes, one of which is flagellin. Binds to flagellin and participates in the assembly of the flagellum. This Wolinella succinogenes (strain ATCC 29543 / DSM 1740 / CCUG 13145 / JCM 31913 / LMG 7466 / NCTC 11488 / FDC 602W) (Vibrio succinogenes) protein is Flagellar assembly factor FliW 2.